The following is a 205-amino-acid chain: Small ribosomal subunit protein uS4 (205 aa).

A disordered region spans residues N18–G49. In terms of domain architecture, S4 RNA-binding spans R94–N157.

The protein belongs to the universal ribosomal protein uS4 family. In terms of assembly, part of the 30S ribosomal subunit. Contacts protein S5. The interaction surface between S4 and S5 is involved in control of translational fidelity.

Functionally, one of the primary rRNA binding proteins, it binds directly to 16S rRNA where it nucleates assembly of the body of the 30S subunit. In terms of biological role, with S5 and S12 plays an important role in translational accuracy. The sequence is that of Small ribosomal subunit protein uS4 from Nitrobacter hamburgensis (strain DSM 10229 / NCIMB 13809 / X14).